A 356-amino-acid polypeptide reads, in one-letter code: Photosystem II protein D1 (356 aa).

3 consecutive transmembrane segments (helical) span residues 29–46, 118–133, and 142–156; these read YVGW…TATT, HFLI…QWEL, and WICV…AATA. Histidine 118 is a binding site for chlorophyll a. A pheophytin a-binding site is contributed by tyrosine 126. [CaMn4O5] cluster is bound by residues aspartate 170 and glutamate 189. Residues 197-218 traverse the membrane as a helical segment; that stretch reads FHMLGVAGVFGGSLFSAMHGSL. Residue histidine 198 participates in chlorophyll a binding. A quinone contacts are provided by residues histidine 215 and 264-265; that span reads SF. Histidine 215 is a binding site for Fe cation. Histidine 272 provides a ligand contact to Fe cation. A helical membrane pass occupies residues 274–288; that stretch reads FLGAWPVIGIWFTAM. [CaMn4O5] cluster-binding residues include histidine 332, glutamate 333, aspartate 342, and alanine 344. Residues 345 to 356 constitute a propeptide that is removed on maturation; sequence SAEPVSAPVING.

The protein belongs to the reaction center PufL/M/PsbA/D family. As to quaternary structure, PSII is composed of 1 copy each of membrane proteins PsbA, PsbB, PsbC, PsbD, PsbE, PsbF, PsbH, PsbI, PsbJ, PsbK, PsbL, PsbM, PsbT, PsbX, PsbY, PsbZ, Psb30/Ycf12, peripheral proteins PsbO, CyanoQ (PsbQ), PsbU, PsbV and a large number of cofactors. It forms dimeric complexes. The D1/D2 heterodimer binds P680, chlorophylls that are the primary electron donor of PSII, and subsequent electron acceptors. It shares a non-heme iron and each subunit binds pheophytin, quinone, additional chlorophylls, carotenoids and lipids. D1 provides most of the ligands for the Mn4-Ca-O5 cluster of the oxygen-evolving complex (OEC). There is also a Cl(-1) ion associated with D1 and D2, which is required for oxygen evolution. The PSII complex binds additional chlorophylls, carotenoids and specific lipids. serves as cofactor. Tyr-161 forms a radical intermediate that is referred to as redox-active TyrZ, YZ or Y-Z. Post-translationally, C-terminally processed by CtpA; processing is essential to allow assembly of the oxygen-evolving complex and thus photosynthetic growth.

The protein localises to the cellular thylakoid membrane. The catalysed reaction is 2 a plastoquinone + 4 hnu + 2 H2O = 2 a plastoquinol + O2. Photosystem II (PSII) is a light-driven water:plastoquinone oxidoreductase that uses light energy to abstract electrons from H(2)O, generating O(2) and a proton gradient subsequently used for ATP formation. It consists of a core antenna complex that captures photons, and an electron transfer chain that converts photonic excitation into a charge separation. The D1/D2 (PsbA/PsbD) reaction center heterodimer binds P680, the primary electron donor of PSII as well as several subsequent electron acceptors. The polypeptide is Photosystem II protein D1 (Crocosphaera subtropica (strain ATCC 51142 / BH68) (Cyanothece sp. (strain ATCC 51142))).